A 471-amino-acid polypeptide reads, in one-letter code: Putative multidrug resistance protein MdtD (471 aa).

Over 1–11 (MTDLPDSTRWQ) the chain is Periplasmic. The chain crosses the membrane as a helical span at residues 12–32 (LWIVAFGFFMQSLDTTIVNTA). Residues 33–48 (LPSMAQSLGESPLHMH) lie on the Cytoplasmic side of the membrane. The helical transmembrane segment at 49–69 (MVIVSYVLTVAVMLPASGWLA) threads the bilayer. At 70–76 (DKVGVRN) the chain is on the periplasmic side. Residues 77–97 (IFFTAIVLFTLGSLFCALSGT) traverse the membrane as a helical segment. At 98 to 101 (LNEL) the chain is on the cytoplasmic side. The chain crosses the membrane as a helical span at residues 102–124 (LLARALQGVGGAMMVPVGRLTVM). Over 125-137 (KIVPREQYMAAMT) the chain is Periplasmic. A helical membrane pass occupies residues 138–158 (FVTLPGQVGPLLGPALGGLLV). Residues 159-164 (EYASWH) lie on the Cytoplasmic side of the membrane. The chain crosses the membrane as a helical span at residues 165 to 185 (WIFLINIPVGIIGAIATLLLM). Topologically, residues 186 to 196 (PNYTMQTRRFD) are periplasmic. The helical transmembrane segment at 197-217 (LSGFLLLAVGMAVLTLALDGS) threads the bilayer. At 218–224 (KGTGLSP) the chain is on the cytoplasmic side. The chain crosses the membrane as a helical span at residues 225-245 (LTIAGLVAVGVVALVLYLLHA). At 246–262 (RNNNRALFSLKLFRTRT) the chain is on the periplasmic side. Residues 263-283 (FSLGLAGSFAGRIGSGMLPFM) traverse the membrane as a helical segment. Topologically, residues 284–285 (TP) are cytoplasmic. The chain crosses the membrane as a helical span at residues 286–306 (VFLQIGLGFSPFHAGLMMIPM). Residues 307–341 (VLGSMGMKRIVVQVVNRFGYRRVLVATTLGLSLVT) are Periplasmic-facing. The chain crosses the membrane as a helical span at residues 342–362 (LLFMTTALLGWYYVLPFVLFL). Residues 363-395 (QGMVNSTRFSSMNTLTLKDLPDNLASSGNSLLS) lie on the Cytoplasmic side of the membrane. Residues 396–416 (MIMQLSMSIGVTIAGLLLGLF) form a helical membrane-spanning segment. Residues 417–430 (GSQHVSVDSGTTQT) lie on the Periplasmic side of the membrane. Residues 431–451 (VFMYTWLSMALIIALPAFIFA) traverse the membrane as a helical segment. Residues 452-471 (RVPNDTHQNVAISRRKRSAQ) lie on the Cytoplasmic side of the membrane.

The protein belongs to the major facilitator superfamily. TCR/Tet family.

Its subcellular location is the cell inner membrane. The sequence is that of Putative multidrug resistance protein MdtD from Escherichia coli (strain K12 / MC4100 / BW2952).